The sequence spans 87 residues: Pyocin-S1 immunity protein (87 aa).

This sequence belongs to the colicins ColE2/ColE8/ColE9 and pyocins S1/S2 family.

This Pseudomonas aeruginosa protein is Pyocin-S1 immunity protein (imm1).